The sequence spans 311 residues: 4-diphosphocytidyl-2-C-methyl-D-erythritol kinase (311 aa).

Residue lysine 11 is part of the active site. 94 to 104 (PVAAGLAGGSA) contacts ATP. The active site involves aspartate 136.

This sequence belongs to the GHMP kinase family. IspE subfamily.

The enzyme catalyses 4-CDP-2-C-methyl-D-erythritol + ATP = 4-CDP-2-C-methyl-D-erythritol 2-phosphate + ADP + H(+). It functions in the pathway isoprenoid biosynthesis; isopentenyl diphosphate biosynthesis via DXP pathway; isopentenyl diphosphate from 1-deoxy-D-xylulose 5-phosphate: step 3/6. Functionally, catalyzes the phosphorylation of the position 2 hydroxy group of 4-diphosphocytidyl-2C-methyl-D-erythritol. The protein is 4-diphosphocytidyl-2-C-methyl-D-erythritol kinase of Synechococcus sp. (strain JA-2-3B'a(2-13)) (Cyanobacteria bacterium Yellowstone B-Prime).